Reading from the N-terminus, the 543-residue chain is Chaperonin GroEL (543 aa).

Residues 29 to 32 (TLGP), lysine 50, 86 to 90 (DGTTT), glycine 413, 480 to 482 (NAA), and aspartate 496 each bind ATP. Residues 524-543 (EKPEKKESTPASAGAGDMDF) form a disordered region.

Belongs to the chaperonin (HSP60) family. As to quaternary structure, forms a cylinder of 14 subunits composed of two heptameric rings stacked back-to-back. Interacts with the co-chaperonin GroES.

The protein resides in the cytoplasm. It carries out the reaction ATP + H2O + a folded polypeptide = ADP + phosphate + an unfolded polypeptide.. Functionally, together with its co-chaperonin GroES, plays an essential role in assisting protein folding. The GroEL-GroES system forms a nano-cage that allows encapsulation of the non-native substrate proteins and provides a physical environment optimized to promote and accelerate protein folding. This Thermus thermophilus (strain ATCC BAA-163 / DSM 7039 / HB27) protein is Chaperonin GroEL.